A 207-amino-acid polypeptide reads, in one-letter code: Uracil phosphoribosyltransferase (207 aa).

5-phospho-alpha-D-ribose 1-diphosphate-binding positions include Arg77, Arg102, and 129-137 (DPMLATGGS). Uracil is bound by residues Ile192 and 197-199 (GDA). Asp198 serves as a coordination point for 5-phospho-alpha-D-ribose 1-diphosphate.

This sequence belongs to the UPRTase family. It depends on Mg(2+) as a cofactor.

The catalysed reaction is UMP + diphosphate = 5-phospho-alpha-D-ribose 1-diphosphate + uracil. Its pathway is pyrimidine metabolism; UMP biosynthesis via salvage pathway; UMP from uracil: step 1/1. Its activity is regulated as follows. Allosterically activated by GTP. Its function is as follows. Catalyzes the conversion of uracil and 5-phospho-alpha-D-ribose 1-diphosphate (PRPP) to UMP and diphosphate. This chain is Uracil phosphoribosyltransferase, found in Nocardia farcinica (strain IFM 10152).